We begin with the raw amino-acid sequence, 393 residues long: NAD(P)H-quinone oxidoreductase subunit H, chloroplastic (393 aa).

It belongs to the complex I 49 kDa subunit family. As to quaternary structure, NDH is composed of at least 16 different subunits, 5 of which are encoded in the nucleus.

The protein localises to the plastid. It is found in the chloroplast thylakoid membrane. The enzyme catalyses a plastoquinone + NADH + (n+1) H(+)(in) = a plastoquinol + NAD(+) + n H(+)(out). It catalyses the reaction a plastoquinone + NADPH + (n+1) H(+)(in) = a plastoquinol + NADP(+) + n H(+)(out). NDH shuttles electrons from NAD(P)H:plastoquinone, via FMN and iron-sulfur (Fe-S) centers, to quinones in the photosynthetic chain and possibly in a chloroplast respiratory chain. The immediate electron acceptor for the enzyme in this species is believed to be plastoquinone. Couples the redox reaction to proton translocation, and thus conserves the redox energy in a proton gradient. The chain is NAD(P)H-quinone oxidoreductase subunit H, chloroplastic from Oryza nivara (Indian wild rice).